The sequence spans 510 residues: Cytochrome P450 11B2, mitochondrial (510 aa).

The transit peptide at 1–34 (MGACDNDFIELHSRVTADVWLARPWQCLHRTRAL) directs the protein to the mitochondrion. Phe391 is a 21-hydroxyprogesterone binding site. Cys457 is a heme binding site.

The protein belongs to the cytochrome P450 family. It depends on heme as a cofactor. As to expression, adrenal cortex.

The protein resides in the mitochondrion inner membrane. The catalysed reaction is a steroid + 2 reduced [adrenodoxin] + O2 + 2 H(+) = an 11beta-hydroxysteroid + 2 oxidized [adrenodoxin] + H2O. It carries out the reaction 21-hydroxyprogesterone + 2 reduced [adrenodoxin] + O2 + 2 H(+) = corticosterone + 2 oxidized [adrenodoxin] + H2O. It catalyses the reaction corticosterone + 2 reduced [adrenodoxin] + O2 + 2 H(+) = 18-hydroxycorticosterone + 2 oxidized [adrenodoxin] + H2O. The enzyme catalyses 18-hydroxycorticosterone + 2 reduced [adrenodoxin] + O2 + 2 H(+) = aldosterone + 2 oxidized [adrenodoxin] + 2 H2O. The catalysed reaction is 11-deoxycortisol + 2 reduced [adrenodoxin] + O2 + 2 H(+) = cortisol + 2 oxidized [adrenodoxin] + H2O. It carries out the reaction cortisol + 2 reduced [adrenodoxin] + O2 + 2 H(+) = 18-hydroxycortisol + 2 oxidized [adrenodoxin] + H2O. It catalyses the reaction 21-hydroxyprogesterone + 2 reduced [adrenodoxin] + O2 + 2 H(+) = 18-hydroxy-11-deoxycorticosterone + 2 oxidized [adrenodoxin] + H2O. The enzyme catalyses 18-hydroxycortisol + 2 reduced [adrenodoxin] + O2 + 2 H(+) = 18-oxocortisol + 2 oxidized [adrenodoxin] + 2 H2O. It functions in the pathway steroid biosynthesis. A cytochrome P450 monooxygenase that catalyzes the biosynthesis of aldosterone, the main mineralocorticoid responsible for salt and water homeostasis. Catalyzes three sequential oxidative reactions of 11-deoxycorticosterone (21-hydroxyprogesterone), namely 11-beta hydroxylation, followed by two successive oxidations at C18 yielding 18-hydroxy and then 18-oxo intermediates (that do not leave the enzyme active site during the consecutive hydroxylation reactions), and end with the formation of aldosterone. Can also produce 18-hydroxycortisol and 18-oxocortisol, derived from successive oxidations of cortisol at C18, normally found at very low levels, but significantly increased in primary aldosteronism, the most common form of secondary hypertension. Mechanistically, uses molecular oxygen inserting one oxygen atom into a substrate and reducing the second into a water molecule. Two electrons are provided by NADPH via a two-protein mitochondrial transfer system comprising flavoprotein FDXR (adrenodoxin/ferredoxin reductase) and nonheme iron-sulfur protein FDX1 or FDX2 (adrenodoxin/ferredoxin). Could also be involved in the androgen metabolic pathway. The protein is Cytochrome P450 11B2, mitochondrial (Cyp11b2) of Rattus norvegicus (Rat).